A 219-amino-acid polypeptide reads, in one-letter code: Kappa-scoloptoxin(11)-Ss1a (219 aa).

Positions 1–16 are cleaved as a signal peptide; it reads MFYSHLLFFTFTFACS. A propeptide spanning residues 17-25 is cleaved from the precursor; it reads SSLNRKTKR.

In terms of processing, contains 8 disulfide bonds. In terms of tissue distribution, expressed by the venom gland.

The protein resides in the secreted. Voltage-gated potassium channel inhibitor. This is Kappa-scoloptoxin(11)-Ss1a from Scolopendra dehaani (Thai centipede).